The sequence spans 111 residues: Large ribosomal subunit protein uL24 (111 aa).

It belongs to the universal ribosomal protein uL24 family. In terms of assembly, part of the 50S ribosomal subunit.

Its function is as follows. One of two assembly initiator proteins, it binds directly to the 5'-end of the 23S rRNA, where it nucleates assembly of the 50S subunit. In terms of biological role, one of the proteins that surrounds the polypeptide exit tunnel on the outside of the subunit. The polypeptide is Large ribosomal subunit protein uL24 (Heliobacterium modesticaldum (strain ATCC 51547 / Ice1)).